The chain runs to 473 residues: GTPase Der (473 aa).

EngA-type G domains are found at residues 3–166 (PVIA…ENPE) and 177–350 (IRIG…ESAM). Residues 9-16 (GRPNVGKS), 56-60 (DTGGL), 118-121 (NKTD), 183-190 (GRPNVGKS), 230-234 (DTAGV), and 295-298 (NKWD) each bind GTP. Residues 351–435 (SKWPTNRLTA…PIRFEFKSGE (85 aa)) form the KH-like domain. The segment covering 444 to 458 (RLTPRQKVKKDNDLK) has biased composition (basic and acidic residues). Positions 444–473 (RLTPRQKVKKDNDLKKGRRIKKTRQKSVKR) are disordered. Residues 459–473 (KGRRIKKTRQKSVKR) are compositionally biased toward basic residues.

The protein belongs to the TRAFAC class TrmE-Era-EngA-EngB-Septin-like GTPase superfamily. EngA (Der) GTPase family. In terms of assembly, associates with the 50S ribosomal subunit.

GTPase that plays an essential role in the late steps of ribosome biogenesis. The polypeptide is GTPase Der (Marinobacter nauticus (strain ATCC 700491 / DSM 11845 / VT8) (Marinobacter aquaeolei)).